Consider the following 793-residue polypeptide: ABC transporter G family member 1 (793 aa).

Over residues 1 to 20 the composition is skewed to low complexity; sequence MDSNNNNNNENEAFSGASES. The segment at 1-96 is disordered; sequence MDSNNNNNNE…NNNQNNNIIN (96 aa). Residues 21 to 37 are compositionally biased toward basic and acidic residues; sequence SEFRKIVEENENEREFE. Residues 59-68 are compositionally biased toward polar residues; that stretch reads ETINPNISLD. Residues 67-102 are a coiled coil; the sequence is LDNNNNNNQNNQNNQNNNNNNNNQNNNIINNLNKKN. Positions 69-96 are enriched in low complexity; sequence NNNNNNQNNQNNQNNNNNNNNQNNNIIN. Positions 123-364 constitute an ABC transporter domain; that stretch reads VQITEKGKKK…FNANGYHCSE (242 aa). ATP is bound at residue 156-163; the sequence is GPSGAGKT. Acidic residues predominate over residues 382–398; the sequence is DQADSDDDDYNDEEEEI. The disordered stretch occupies residues 382–457; that stretch reads DQADSDDDDY…QSTDGRARRR (76 aa). Positions 399 to 413 are enriched in gly residues; that stretch reads GGGGGGSGGGAGGIE. Residues 421–437 are compositionally biased toward polar residues; sequence PTMNGSAVDNIKNNELK. Positions 438–448 are enriched in low complexity; the sequence is QQQQQQQQQQQ. In terms of domain architecture, ABC transmembrane type-2 spans 527–785; sequence MAFKVNLIQA…VLTFLVLKLK (259 aa). A run of 7 helical transmembrane segments spans residues 533-553, 563-583, 610-630, 647-667, 674-694, 701-721, and 764-784; these read LIQA…LGLG, VVAF…IHVF, FMDA…VYWM, FVLM…LISS, VGTA…GFFI, GWLV…AAVI, and VWIL…VLKL.

This sequence belongs to the ABC transporter superfamily. ABCG family.

Its subcellular location is the membrane. In Dictyostelium discoideum (Social amoeba), this protein is ABC transporter G family member 1 (abcG1).